Reading from the N-terminus, the 1701-residue chain is DDB1- and CUL4-associated factor homolog 1 (1701 aa).

The segment covering 224 to 245 (HAEQSTSNGTSIPSIKITSVDG) has biased composition (polar residues). Disordered regions lie at residues 224 to 269 (HAEQ…RRTE), 883 to 906 (DRPA…GNNF), and 932 to 961 (RPSN…TPTL). The LisH domain maps to 851–883 (NQAELLQLIHDHLLKSKLDSVAAMLKSEAKLPD). Residues 888–906 (RSINTPILNKPLPSSGNNF) are compositionally biased toward polar residues. WD repeat units lie at residues 1086-1125 (DHDE…DEGH), 1128-1169 (CHGS…QRVH), 1171-1210 (YRED…DTYL), and 1215-1252 (GLQY…HVFD). 2 short sequence motifs (DWD box) span residues 1237-1245 (LLWDVRKKN) and 1275-1282 (EVYDIRTF). 3 disordered regions span residues 1384–1559 (IGRL…DINL), 1566–1585 (EARV…PVDP), and 1641–1701 (LVRG…DDEA). Composition is skewed to acidic residues over residues 1390-1423 (NEDE…DEEI) and 1451-1461 (DDNDTLDDLDF). Basic residues predominate over residues 1468–1479 (IIRRQAQRRRQR). 2 stretches are compositionally biased toward acidic residues: residues 1494 to 1512 (EGSD…DPDF) and 1520 to 1543 (DLVD…DDDS). Positions 1567–1581 (ARVVENEGNNERPAR) are enriched in basic and acidic residues. Over residues 1667-1678 (DTDEYQSEEEEI) the composition is skewed to acidic residues.

The protein belongs to the VPRBP/DCAF1 family. In terms of assembly, component of the cul4-rbx1-ddb1-dcaf1 E3 ubiquitin-protein ligase complex.

Its subcellular location is the nucleus. The protein operates within protein modification; protein ubiquitination. In terms of biological role, component of the cul4-rbx1-ddb1-dcaf1 E3 ubiquitin-protein ligase complex, dcaf1 may function as the substrate recognition module within this complex. The polypeptide is DDB1- and CUL4-associated factor homolog 1 (dcaf-1) (Caenorhabditis elegans).